We begin with the raw amino-acid sequence, 506 residues long: Ribose import ATP-binding protein RbsA 2 (506 aa).

ABC transporter domains are found at residues 6-241 and 254-499; these read LSMT…VGRV and EKSN…SITI. 38-45 serves as a coordination point for ATP; that stretch reads GENGAGKS.

This sequence belongs to the ABC transporter superfamily. Ribose importer (TC 3.A.1.2.1) family. The complex is composed of an ATP-binding protein (RbsA), two transmembrane proteins (RbsC) and a solute-binding protein (RbsB).

The protein resides in the cell inner membrane. It catalyses the reaction D-ribose(out) + ATP + H2O = D-ribose(in) + ADP + phosphate + H(+). Its function is as follows. Part of the ABC transporter complex RbsABC involved in ribose import. Responsible for energy coupling to the transport system. This is Ribose import ATP-binding protein RbsA 2 from Agrobacterium fabrum (strain C58 / ATCC 33970) (Agrobacterium tumefaciens (strain C58)).